We begin with the raw amino-acid sequence, 456 residues long: Bifunctional protein GlmU (456 aa).

The pyrophosphorylase stretch occupies residues 1-228 (MPQNTLNIVI…SHLAAGVNNK (228 aa)). Residues 11–14 (LAAG), K25, Q75, 80–81 (GT), 102–104 (YGD), G138, E153, N168, and N226 each bind UDP-N-acetyl-alpha-D-glucosamine. D104 contributes to the Mg(2+) binding site. N226 contributes to the Mg(2+) binding site. The linker stretch occupies residues 229-249 (LQLTELERIFQTEQAQELLKA). The N-acetyltransferase stretch occupies residues 250–456 (GVTLRDPARF…GWVRPEKDKQ (207 aa)). R332 and K350 together coordinate UDP-N-acetyl-alpha-D-glucosamine. H362 serves as the catalytic Proton acceptor. UDP-N-acetyl-alpha-D-glucosamine is bound by residues Y365 and N376. Residues A379, 385–386 (NY), S404, A422, and R439 contribute to the acetyl-CoA site.

This sequence in the N-terminal section; belongs to the N-acetylglucosamine-1-phosphate uridyltransferase family. The protein in the C-terminal section; belongs to the transferase hexapeptide repeat family. As to quaternary structure, homotrimer. Mg(2+) is required as a cofactor.

It localises to the cytoplasm. It carries out the reaction alpha-D-glucosamine 1-phosphate + acetyl-CoA = N-acetyl-alpha-D-glucosamine 1-phosphate + CoA + H(+). The enzyme catalyses N-acetyl-alpha-D-glucosamine 1-phosphate + UTP + H(+) = UDP-N-acetyl-alpha-D-glucosamine + diphosphate. It participates in nucleotide-sugar biosynthesis; UDP-N-acetyl-alpha-D-glucosamine biosynthesis; N-acetyl-alpha-D-glucosamine 1-phosphate from alpha-D-glucosamine 6-phosphate (route II): step 2/2. It functions in the pathway nucleotide-sugar biosynthesis; UDP-N-acetyl-alpha-D-glucosamine biosynthesis; UDP-N-acetyl-alpha-D-glucosamine from N-acetyl-alpha-D-glucosamine 1-phosphate: step 1/1. The protein operates within bacterial outer membrane biogenesis; LPS lipid A biosynthesis. Functionally, catalyzes the last two sequential reactions in the de novo biosynthetic pathway for UDP-N-acetylglucosamine (UDP-GlcNAc). The C-terminal domain catalyzes the transfer of acetyl group from acetyl coenzyme A to glucosamine-1-phosphate (GlcN-1-P) to produce N-acetylglucosamine-1-phosphate (GlcNAc-1-P), which is converted into UDP-GlcNAc by the transfer of uridine 5-monophosphate (from uridine 5-triphosphate), a reaction catalyzed by the N-terminal domain. The sequence is that of Bifunctional protein GlmU from Neisseria meningitidis serogroup B (strain ATCC BAA-335 / MC58).